The following is an 819-amino-acid chain: Protein kinase C-binding protein NELL2 (819 aa).

Positions 1–24 (MHAMESRVLLRTFCVILGLGAVWG) are cleaved as a signal peptide. 4 N-linked (GlcNAc...) asparagine glycosylation sites follow: Asn-56, Asn-228, Asn-296, and Asn-301. The region spanning 67-231 (PRSIKASTAT…AQCPDLNRTC (165 aa)) is the Laminin G-like domain. Positions 275 to 334 (RTCTVKGTTYRESESWTDGCKNCTCLNGTIQCETLVCPAPDCPPKSAPAYVDGKCCKECK) constitute a VWFC 1 domain. Positions 400 to 442 (GYDFCSEKHTCMENSVCRNLNDRAVCSCRDGFRALREDNAYCE) constitute an EGF-like 1 domain. Intrachain disulfides connect Cys-404–Cys-416, Cys-410–Cys-425, and Cys-427–Cys-441. Ca(2+)-binding residues include Asp-443, Ile-444, and Glu-446. Residues 443–484 (DIDECAEGRHYCRENTMCVNTPGSFMCICKTGYIRIDDYSCT) enclose the EGF-like 2; calcium-binding domain. Intrachain disulfides connect Cys-447/Cys-460, Cys-454/Cys-469, Cys-471/Cys-483, Cys-489/Cys-502, Cys-496/Cys-511, Cys-513/Cys-524, Cys-528/Cys-538, Cys-532/Cys-544, and Cys-546/Cys-555. Ca(2+) is bound by residues Asn-462, Thr-463, and Ser-466. The 41-residue stretch at 485 to 525 (EHDECLTNQHNCDENALCFNTVGGHNCVCKPGYTGNGTTCK) folds into the EGF-like 3; calcium-binding domain. N-linked (GlcNAc...) asparagine glycosylation is present at Asn-520. The EGF-like 4 domain maps to 526 to 556 (AFCKDGCRNGGACIAANVCACPQGFTGPSCE). Thr-551 is a glycosylation site (O-linked (GlcNAc...) threonine). Ca(2+) contacts are provided by Asp-558, Ile-559, and Glu-561. Positions 558 to 604 (DIDECSEGFVQCDSRANCINLPGWYHCECRDGYHDNGMFAPGGESCE) constitute an EGF-like 5; calcium-binding domain. Intrachain disulfides connect Cys-562-Cys-575, Cys-569-Cys-584, and Cys-586-Cys-603. Asn-577, Leu-578, and Trp-581 together coordinate Ca(2+). Ca(2+) contacts are provided by Asp-605, Ile-606, and Glu-608. Positions 605-640 (DIDECGTGRHSCTNDTICFNLDGGYDCRCPHGKNCT) constitute an EGF-like 6; calcium-binding domain. 3 cysteine pairs are disulfide-bonded: Cys-609–Cys-622, Cys-616–Cys-631, and Cys-633–Cys-639. Asn-618 carries an N-linked (GlcNAc...) asparagine glycan. Residues Asn-624, Leu-625, and Gly-628 each coordinate Ca(2+). Residue Asn-638 is glycosylated (N-linked (GlcNAc...) asparagine). The region spanning 701 to 759 (SQCLHQNGETVYNSGDTWVQDCRQCRCLQGEVDCWPLACPEVECEFSVLPENECCPRCV) is the VWFC 2 domain.

As to quaternary structure, homotrimer. Interacts with NICOL1; this interaction triggers epididymal differentiation. Interacts (via EGF domains) with ROBO3 (via FN domains); binding to ROBO3 induces repulsive guidance cue for commissural axons. Expressed in brain and testis but not in epididymis. Expressed in regions flanking the commissural axon trajectory, including the ventral horn.

The protein resides in the secreted. In terms of biological role, plays multiple roles in neural tissues, regulates neuronal proliferation, survival, differentiation, polarization, as well as axon guidance and synaptic functions. Plays an important role in axon development during neuronal differentiation through the MAPK intracellular signaling pathway. Via binding to its receptor ROBO3, plays a role in axon guidance, functioning as a repulsive axon guidance cue that contributes to commissural axon guidance to the midline. Required for neuron survival through the modulation of MAPK signaling pathways too. Involved in the regulation of hypothalamic GNRH secretion and the control of puberty. Its function is as follows. Epididymal-secreted protein that signals through a ROS1-pathway to regulate the epididymal initial segment (IS) maturation, sperm maturation and male fertility. In Mus musculus (Mouse), this protein is Protein kinase C-binding protein NELL2.